The following is a 100-amino-acid chain: Serine protease inhibitor 1 protein (100 aa).

Positions 1 to 20 are cleaved as a signal peptide; it reads MKHLLIVSLVFVTIIWKIEC. Intrachain disulfides connect Cys-42–Cys-74, Cys-51–Cys-69, Cys-54–Cys-65, Cys-58–Cys-93, and Cys-76–Cys-90. The 52-residue stretch at 42 to 93 folds into the TIL domain; sequence CGLNEVWMVCSSCEEECGKTPQPCPRICQPARCQCPAHKGYRRDGQGNCIFC.

It is found in the secreted. In Caenorhabditis elegans, this protein is Serine protease inhibitor 1 protein.